A 426-amino-acid polypeptide reads, in one-letter code: Deoxyguanosinetriphosphate triphosphohydrolase-like protein (426 aa).

The interval 1–23 is disordered; the sequence is MYPYSESDAQRLHQEAPKASQLA. Residues 67 to 217 form the HD domain; that stretch reads RLTHSLEVAQ…MDFSDDIAYS (151 aa).

Belongs to the dGTPase family. Type 2 subfamily.

The polypeptide is Deoxyguanosinetriphosphate triphosphohydrolase-like protein (Corynebacterium efficiens (strain DSM 44549 / YS-314 / AJ 12310 / JCM 11189 / NBRC 100395)).